A 138-amino-acid chain; its full sequence is Large-conductance mechanosensitive channel (138 aa).

3 helical membrane-spanning segments follow: residues 15–35, 38–58, and 80–100; these read VDLA…NSIV, IIMP…MFIQ, and GNFI…FLVV.

The protein belongs to the MscL family. As to quaternary structure, homopentamer.

It localises to the cell inner membrane. Channel that opens in response to stretch forces in the membrane lipid bilayer. May participate in the regulation of osmotic pressure changes within the cell. In Brucella canis (strain ATCC 23365 / NCTC 10854 / RM-666), this protein is Large-conductance mechanosensitive channel.